The sequence spans 200 residues: Pyridoxal 5'-phosphate synthase subunit PdxT (200 aa).

An L-glutamine-binding site is contributed by 52 to 54 (GES). C84 acts as the Nucleophile in catalysis. L-glutamine-binding positions include R116 and 145 to 146 (IR). Active-site charge relay system residues include H181 and E183.

It belongs to the glutaminase PdxT/SNO family. In terms of assembly, in the presence of PdxS, forms a dodecamer of heterodimers. Only shows activity in the heterodimer.

The catalysed reaction is aldehydo-D-ribose 5-phosphate + D-glyceraldehyde 3-phosphate + L-glutamine = pyridoxal 5'-phosphate + L-glutamate + phosphate + 3 H2O + H(+). The enzyme catalyses L-glutamine + H2O = L-glutamate + NH4(+). The protein operates within cofactor biosynthesis; pyridoxal 5'-phosphate biosynthesis. In terms of biological role, catalyzes the hydrolysis of glutamine to glutamate and ammonia as part of the biosynthesis of pyridoxal 5'-phosphate. The resulting ammonia molecule is channeled to the active site of PdxS. The sequence is that of Pyridoxal 5'-phosphate synthase subunit PdxT from Saccharolobus islandicus (strain Y.G.57.14 / Yellowstone #1) (Sulfolobus islandicus).